The primary structure comprises 756 residues: Protein psiP (756 aa).

The signal sequence occupies residues 1 to 23; it reads MFIQRTFLKVLTLLSIVTVLVHG. Topologically, residues 24 to 692 are extracellular; it reads QTQPKDKITL…NCNTGAVVST (669 aa). N82 carries an N-linked (GlcNAc...) asparagine glycan. The PA14 domain maps to 126-281; that stretch reads LNWNGEAYEY…VDYCGVCEGD (156 aa). 4 N-linked (GlcNAc...) asparagine glycosylation sites follow: N359, N483, N564, and N663. Residues 693 to 713 traverse the membrane as a helical segment; the sequence is AVIAGSTVAGAVALGIFLYGG. The Cytoplasmic segment spans residues 714–756; it reads KKGYDYWKDSRNISMGSSNSNPLYEEQQTGRGVNPMYDDPAAN. Polar residues predominate over residues 730–744; sequence SSNSNPLYEEQQTGR. The disordered stretch occupies residues 730-756; the sequence is SSNSNPLYEEQQTGRGVNPMYDDPAAN.

The protein belongs to the prespore-cell-inducing factor family.

It localises to the membrane. The chain is Protein psiP (psiP) from Dictyostelium discoideum (Social amoeba).